The chain runs to 391 residues: Chaperone protein DnaJ (391 aa).

In terms of domain architecture, J spans aspartate 6–glycine 70. A CR-type zinc finger spans residues glycine 145–valine 226. Residues cysteine 158, cysteine 161, cysteine 174, cysteine 177, cysteine 200, cysteine 203, cysteine 214, and cysteine 217 each contribute to the Zn(2+) site. CXXCXGXG motif repeat units follow at residues cysteine 158–glycine 165, cysteine 174–glycine 181, cysteine 200–glycine 207, and cysteine 214–arginine 221.

Belongs to the DnaJ family. As to quaternary structure, homodimer. Zn(2+) serves as cofactor.

It is found in the cytoplasm. Its function is as follows. Participates actively in the response to hyperosmotic and heat shock by preventing the aggregation of stress-denatured proteins and by disaggregating proteins, also in an autonomous, DnaK-independent fashion. Unfolded proteins bind initially to DnaJ; upon interaction with the DnaJ-bound protein, DnaK hydrolyzes its bound ATP, resulting in the formation of a stable complex. GrpE releases ADP from DnaK; ATP binding to DnaK triggers the release of the substrate protein, thus completing the reaction cycle. Several rounds of ATP-dependent interactions between DnaJ, DnaK and GrpE are required for fully efficient folding. Also involved, together with DnaK and GrpE, in the DNA replication of plasmids through activation of initiation proteins. This is Chaperone protein DnaJ from Mycoplasmoides gallisepticum (strain R(low / passage 15 / clone 2)) (Mycoplasma gallisepticum).